Here is a 5148-residue protein sequence, read N- to C-terminus: E3 ubiquitin-protein ligase RNF213 (5148 aa).

The span at 38–48 (DNTLVVSSTPE) shows a compositional bias: polar residues. The tract at residues 38–341 (DNTLVVSSTP…QAAAPEPTSA (304 aa)) is disordered. The span at 69–78 (PGKELEKPEE) shows a compositional bias: basic and acidic residues. Residues 101–113 (GTISSSEAPSSGL) are compositionally biased toward polar residues. Residues 130-146 (PQNQAQQGGAASQPGHP) show a composition bias toward low complexity. A Phosphoserine modification is found at serine 196. Basic and acidic residues-rich tracts occupy residues 233–245 (SKGE…KKVP), 257–267 (AGKETGEDVRK), and 279–289 (KHGDQEAELKG). Residues 319–335 (AAAVKTQQAAAPQQAAA) are compositionally biased toward low complexity. Lysine 1128 is covalently cross-linked (Glycyl lysine isopeptide (Lys-Gly) (interchain with G-Cter in SUMO2)). Residues 1957 to 1962 (GVGKSL), glutamate 2060, alanine 2114, aspartate 2116, and arginine 2177 contribute to the ATP site. Position 2234 is a phosphoserine (serine 2234). Residues lysine 2460 and serine 2535 each coordinate ATP. Positions 3435-3465 (EEMEIETSQSKELAEEQMEVEDSEEMKKASD) form a coiled coil. Residues cysteine 3947, cysteine 3950, cysteine 3962, histidine 3964, cysteine 3967, cysteine 3970, cysteine 3982, cysteine 3985, cysteine 4451, and histidine 4455 each coordinate Zn(2+). An RING-type zinc finger spans residues 3947–3986 (CFICHGDAQDPVCLPCDHVYCLRCIQTWLIPGQMMCPYCL). The segment at 4429–4501 (MPEDLLVHAR…IRNNEDRTQT (73 aa)) adopts an RZ-type zinc-finger fold. Cysteine 4462 acts as the Nucleophile; for E3 ubiquitin-lipopolysaccharide ligase activity in catalysis. Zn(2+) contacts are provided by cysteine 4471 and cysteine 4474.

The protein belongs to the AAA ATPase family. In terms of assembly, monomer. Interacts with UBE2L3/UBCH7; UBE2L3/UBCH7 is the most efficient ubiquitin-conjugating enzyme E2 for the ubiquitin ligase activity. Interacts with UBE2N/UBC13; promoting 'Lys-63'-linked ubiquitination of target proteins.

The protein localises to the cytoplasm. Its subcellular location is the cytosol. The protein resides in the lipid droplet. The enzyme catalyses S-ubiquitinyl-[E2 ubiquitin-conjugating enzyme]-L-cysteine + [acceptor protein]-L-lysine = [E2 ubiquitin-conjugating enzyme]-L-cysteine + N(6)-ubiquitinyl-[acceptor protein]-L-lysine.. It carries out the reaction ATP + H2O = ADP + phosphate + H(+). It participates in protein modification; protein ubiquitination. In terms of biological role, atypical E3 ubiquitin ligase that can catalyze ubiquitination of both proteins and lipids, and which is involved in various processes, such as lipid metabolism, angiogenesis and cell-autonomous immunity. Acts as a key immune sensor by catalyzing ubiquitination of the lipid A moiety of bacterial lipopolysaccharide (LPS) via its RZ-type zinc-finger: restricts the proliferation of cytosolic bacteria, such as Salmonella, by generating the bacterial ubiquitin coat through the ubiquitination of LPS. Also acts indirectly by mediating the recruitment of the LUBAC complex, which conjugates linear polyubiquitin chains. Ubiquitination of LPS triggers cell-autonomous immunity, such as antibacterial autophagy, leading to degradation of the microbial invader. Involved in lipid metabolism by regulating fat storage and lipid droplet formation; act by inhibiting the lipolytic process. Also regulates lipotoxicity by inhibiting desaturation of fatty acids. Also acts as an E3 ubiquitin-protein ligase via its RING-type zinc finger: mediates 'Lys-63'-linked ubiquitination of target proteins. Involved in the non-canonical Wnt signaling pathway in vascular development: acts by mediating ubiquitination and degradation of FLNA and NFATC2 downstream of RSPO3, leading to inhibit the non-canonical Wnt signaling pathway and promoting vessel regression. Also has ATPase activity; ATPase activity is required for ubiquitination of LPS. The chain is E3 ubiquitin-protein ligase RNF213 from Mus musculus (Mouse).